A 164-amino-acid polypeptide reads, in one-letter code: 2-C-methyl-D-erythritol 2,4-cyclodiphosphate synthase (164 aa).

A divalent metal cation-binding residues include D8 and H10. 4-CDP-2-C-methyl-D-erythritol 2-phosphate is bound by residues 8 to 10 and 34 to 35; these read DVH and HS. A divalent metal cation is bound at residue H42. 4-CDP-2-C-methyl-D-erythritol 2-phosphate is bound by residues 56–58, 132–135, F139, and K142; these read DIG and TTEE.

It belongs to the IspF family. As to quaternary structure, homotrimer. Requires a divalent metal cation as cofactor.

The catalysed reaction is 4-CDP-2-C-methyl-D-erythritol 2-phosphate = 2-C-methyl-D-erythritol 2,4-cyclic diphosphate + CMP. It functions in the pathway isoprenoid biosynthesis; isopentenyl diphosphate biosynthesis via DXP pathway; isopentenyl diphosphate from 1-deoxy-D-xylulose 5-phosphate: step 4/6. Functionally, involved in the biosynthesis of isopentenyl diphosphate (IPP) and dimethylallyl diphosphate (DMAPP), two major building blocks of isoprenoid compounds. Catalyzes the conversion of 4-diphosphocytidyl-2-C-methyl-D-erythritol 2-phosphate (CDP-ME2P) to 2-C-methyl-D-erythritol 2,4-cyclodiphosphate (ME-CPP) with a corresponding release of cytidine 5-monophosphate (CMP). The sequence is that of 2-C-methyl-D-erythritol 2,4-cyclodiphosphate synthase from Clostridium kluyveri (strain NBRC 12016).